The primary structure comprises 726 residues: Catalase-peroxidase (726 aa).

Positions 90 to 213 form a cross-link, tryptophyl-tyrosyl-methioninium (Trp-Tyr) (with M-239); it reads WHAAGTYRIG…LAAVQMGLIY (124 aa). Histidine 91 serves as the catalytic Proton acceptor. The tryptophyl-tyrosyl-methioninium (Tyr-Met) (with W-90) cross-link spans 213–239; that stretch reads YVNPEGPNGNPDPLAAARDIRETFARM. Histidine 254 lines the heme b pocket. The tract at residues 334 to 359 is disordered; that stretch reads AHQWKPKHGAGANTVPDAHDPSKRHA.

This sequence belongs to the peroxidase family. Peroxidase/catalase subfamily. Homodimer or homotetramer. The cofactor is heme b. Post-translationally, formation of the three residue Trp-Tyr-Met cross-link is important for the catalase, but not the peroxidase activity of the enzyme.

It catalyses the reaction H2O2 + AH2 = A + 2 H2O. It carries out the reaction 2 H2O2 = O2 + 2 H2O. Functionally, bifunctional enzyme with both catalase and broad-spectrum peroxidase activity. This is Catalase-peroxidase from Bradyrhizobium sp. (strain BTAi1 / ATCC BAA-1182).